A 346-amino-acid polypeptide reads, in one-letter code: 4-hydroxy-2-oxovalerate aldolase 2 (346 aa).

A Pyruvate carboxyltransferase domain is found at 8–258 (VTLVDTTLRD…HTGVELFPLI (251 aa)). Substrate-binding positions include 16–17 (RD), serine 170, and histidine 197. Residue aspartate 17 participates in Mn(2+) binding. The Mn(2+) site is built by histidine 197 and histidine 199. Substrate is bound at residue tyrosine 288.

This sequence belongs to the 4-hydroxy-2-oxovalerate aldolase family.

The enzyme catalyses (S)-4-hydroxy-2-oxopentanoate = acetaldehyde + pyruvate. This Nocardia farcinica (strain IFM 10152) protein is 4-hydroxy-2-oxovalerate aldolase 2.